Here is a 110-residue protein sequence, read N- to C-terminus: Glutaredoxin-2 (110 aa).

One can recognise a Glutaredoxin domain in the interval 6–106 (KAFVEKAISN…KMIAELKENK (101 aa)). A disulfide bridge connects residues Cys26 and Cys29.

It belongs to the glutaredoxin family.

The disulfide bond functions as an electron carrier in the glutathione-dependent synthesis of deoxyribonucleotides by the enzyme ribonucleotide reductase. In addition, it is also involved in reducing some disulfides in a coupled system with glutathione reductase. Thioltransferase catalyzes cellular thiol-disulfide transhydrogenation reactions. It transfers reducing equivalents to cytosolic protein and nonprotein disulfides. The sequence is that of Glutaredoxin-2 (grx2) from Schizosaccharomyces pombe (strain 972 / ATCC 24843) (Fission yeast).